A 953-amino-acid chain; its full sequence is Valine--tRNA ligase (953 aa).

The 'HIGH' region signature appears at 42 to 52 (PNVTGSLHMGH). The short motif at 554 to 558 (KMSKS) is the 'KMSKS' region element. Residue Lys-557 coordinates ATP. A coiled-coil region spans residues 884–952 (LIDKDAELDR…LEQQKATIAA (69 aa)).

This sequence belongs to the class-I aminoacyl-tRNA synthetase family. ValS type 1 subfamily. In terms of assembly, monomer.

Its subcellular location is the cytoplasm. The catalysed reaction is tRNA(Val) + L-valine + ATP = L-valyl-tRNA(Val) + AMP + diphosphate. Catalyzes the attachment of valine to tRNA(Val). As ValRS can inadvertently accommodate and process structurally similar amino acids such as threonine, to avoid such errors, it has a 'posttransfer' editing activity that hydrolyzes mischarged Thr-tRNA(Val) in a tRNA-dependent manner. This chain is Valine--tRNA ligase, found in Vibrio cholerae serotype O1 (strain ATCC 39315 / El Tor Inaba N16961).